A 721-amino-acid polypeptide reads, in one-letter code: Polyribonucleotide nucleotidyltransferase (721 aa).

Residues Asp-495 and Asp-501 each coordinate Mg(2+). The 60-residue stretch at 562–621 (PRLLSFRIDPELIGTVIGPGGRTIKGITERTNTKIDIEDGGIVTIASHDGAAAEEAQKII) folds into the KH domain. Positions 631-699 (GEVFSGSITR…NRGRINLTLR (69 aa)) constitute an S1 motif domain.

This sequence belongs to the polyribonucleotide nucleotidyltransferase family. The cofactor is Mg(2+).

The protein localises to the cytoplasm. It carries out the reaction RNA(n+1) + phosphate = RNA(n) + a ribonucleoside 5'-diphosphate. Functionally, involved in mRNA degradation. Catalyzes the phosphorolysis of single-stranded polyribonucleotides processively in the 3'- to 5'-direction. This chain is Polyribonucleotide nucleotidyltransferase, found in Synechococcus sp. (strain CC9605).